Here is a 100-residue protein sequence, read N- to C-terminus: Small ribosomal subunit protein uS14 (100 aa).

Belongs to the universal ribosomal protein uS14 family. Part of the 30S ribosomal subunit. Contacts proteins S3 and S10.

Its function is as follows. Binds 16S rRNA, required for the assembly of 30S particles and may also be responsible for determining the conformation of the 16S rRNA at the A site. This is Small ribosomal subunit protein uS14 from Microcystis aeruginosa (strain NIES-843 / IAM M-2473).